We begin with the raw amino-acid sequence, 359 residues long: N-acetylneuraminate-9-phosphate synthase (359 aa).

Residues Lys61, Lys74, and Lys79 each carry the N6-acetyllysine modification. Ser275 is modified (phosphoserine). An N6-acetyllysine modification is found at Lys290. The region spanning 294–353 (SVVAKVKIPEGTILTMDMLTVKVGEPKGYPPEDIFNLVGKKVLVTVEEDDTIMEELVDNH) is the AFP-like domain.

In terms of tissue distribution, ubiquitous.

The catalysed reaction is aldehydo-N-acetyl-D-mannosamine 6-phosphate + phosphoenolpyruvate + H2O = N-acetylneuraminate 9-phosphate + phosphate. It catalyses the reaction aldehydo-D-mannose 6-phosphate + phosphoenolpyruvate + H2O = 3-deoxy-D-glycero-beta-D-galacto-non-2-ulopyranosonate 9-phosphate + phosphate. Functionally, catalyzes the condensation of phosphoenolpyruvate (PEP) and N-acetylmannosamine 6-phosphate (ManNAc-6-P) to synthesize N-acetylneuraminate-9-phosphate (Neu5Ac-9-P). Also catalyzes the condensation of PEP and D-mannose 6-phosphate (Man-6-P) to produce 3-deoxy-D-glycero-beta-D-galacto-non-2-ulopyranosonate 9-phosphate (KDN-9-P). Neu5Ac-9-P and KDN-9-P are the phosphorylated forms of sialic acids N-acetylneuraminic acid (Neu5Ac) and deaminoneuraminic acid (KDN), respectively. Required for brain and skeletal development. The polypeptide is N-acetylneuraminate-9-phosphate synthase (Homo sapiens (Human)).